Consider the following 482-residue polypeptide: Rho GTPase-activating protein 15 (482 aa).

Residues Ser-51, Ser-111, Ser-205, Ser-208, and Ser-250 each carry the phosphoserine modification. One can recognise a PH domain in the interval 87–198 (MVEKEGYLQK…WFHAIKNAID (112 aa)). A Rho-GAP domain is found at 288 to 477 (SHLHTVCERE…FMLTEYDKIF (190 aa)).

The protein resides in the cytoplasm. Its subcellular location is the membrane. In terms of biological role, GTPase activator for the Rho-type GTPases by converting them to an inactive GDP-bound state. Has activity toward RAC1. Overexpression results in an increase in actin stress fibers and cell contraction. This is Rho GTPase-activating protein 15 (Arhgap15) from Rattus norvegicus (Rat).